A 491-amino-acid chain; its full sequence is Cysteine--tRNA ligase (491 aa).

Cys-31 serves as a coordination point for Zn(2+). The 'HIGH' region signature appears at 33–43 (PTVYGDAHLGH). Zn(2+) is bound by residues Cys-226, His-251, and Glu-255. The 'KMSKS' region motif lies at 283–287 (KMGKS). Lys-286 lines the ATP pocket.

This sequence belongs to the class-I aminoacyl-tRNA synthetase family. As to quaternary structure, monomer. Requires Zn(2+) as cofactor.

Its subcellular location is the cytoplasm. The catalysed reaction is tRNA(Cys) + L-cysteine + ATP = L-cysteinyl-tRNA(Cys) + AMP + diphosphate. This Parabacteroides distasonis (strain ATCC 8503 / DSM 20701 / CIP 104284 / JCM 5825 / NCTC 11152) protein is Cysteine--tRNA ligase.